Reading from the N-terminus, the 261-residue chain is 2-phytyl-1,4-beta-naphthoquinone methyltransferase, chloroplastic (261 aa).

A chloroplast-targeting transit peptide spans 1–30 (MAALLGIVSPVTFTGKHPVNSRSRRRTVVK).

Belongs to the class I-like SAM-binding methyltransferase superfamily. MenG/UbiE family.

The protein resides in the plastid. It is found in the chloroplast. It catalyses the reaction demethylphylloquinol + S-adenosyl-L-methionine = phylloquinol + S-adenosyl-L-homocysteine + H(+). Involved in the biosynthesis of phylloquinone (vitamin K1). Methyltransferase required for the conversion of 2-phytyl-1,4-beta-naphthoquinol to phylloquinol. The protein is 2-phytyl-1,4-beta-naphthoquinone methyltransferase, chloroplastic of Arabidopsis thaliana (Mouse-ear cress).